The following is a 316-amino-acid chain: Ribosomal RNA small subunit methyltransferase H (316 aa).

Residues 35–37, Asp55, Phe84, Asp105, and Gln112 each bind S-adenosyl-L-methionine; that span reads SGH.

Belongs to the methyltransferase superfamily. RsmH family.

The protein localises to the cytoplasm. The catalysed reaction is cytidine(1402) in 16S rRNA + S-adenosyl-L-methionine = N(4)-methylcytidine(1402) in 16S rRNA + S-adenosyl-L-homocysteine + H(+). Functionally, specifically methylates the N4 position of cytidine in position 1402 (C1402) of 16S rRNA. The polypeptide is Ribosomal RNA small subunit methyltransferase H (Streptococcus pyogenes serotype M49 (strain NZ131)).